The primary structure comprises 211 residues: uncharacterized protein (211 aa).

Disordered stretches follow at residues 45 to 74 and 147 to 211; these read RSCG…GALS and AETR…WEEP. Over residues 48-71 the composition is skewed to low complexity; the sequence is GRSSTGGCSPCSGPGPSSPRTSRG. A compositionally biased stretch (polar residues) spans 195–205; it reads DSGSIKMSENE.

This is an uncharacterized protein from Homo sapiens (Human).